The sequence spans 217 residues: 3,4-dihydroxy-2-butanone 4-phosphate synthase (217 aa).

Residues 37–38, aspartate 42, 150–154, and glutamate 174 contribute to the D-ribulose 5-phosphate site; these read RE and RGGHT. Glutamate 38 contacts Mg(2+). Histidine 153 provides a ligand contact to Mg(2+).

This sequence belongs to the DHBP synthase family. In terms of assembly, homodimer. It depends on Mg(2+) as a cofactor. Mn(2+) is required as a cofactor.

It catalyses the reaction D-ribulose 5-phosphate = (2S)-2-hydroxy-3-oxobutyl phosphate + formate + H(+). It functions in the pathway cofactor biosynthesis; riboflavin biosynthesis; 2-hydroxy-3-oxobutyl phosphate from D-ribulose 5-phosphate: step 1/1. Functionally, catalyzes the conversion of D-ribulose 5-phosphate to formate and 3,4-dihydroxy-2-butanone 4-phosphate. The chain is 3,4-dihydroxy-2-butanone 4-phosphate synthase from Citrobacter koseri (strain ATCC BAA-895 / CDC 4225-83 / SGSC4696).